The following is a 171-amino-acid chain: AN1-type zinc finger protein 2A (171 aa).

2 AN1-type zinc fingers span residues 4–52 and 94–142; these read PDLG…KKDV and KVFT…SSAS. Positions 10, 15, 25, 28, 33, 36, 42, 44, 100, 105, 115, 118, 123, 126, 132, and 134 each coordinate Zn(2+). A disordered region spans residues 134–171; that stretch reads CQAGSSSASRGRTSTSRAAEQKPSGVSWLAQRLRRTVK. The span at 136–151 shows a compositional bias: low complexity; the sequence is AGSSSASRGRTSTSRA.

The protein resides in the cytoplasm. The protein localises to the nucleus. The chain is AN1-type zinc finger protein 2A (Zfand2a) from Mus musculus (Mouse).